The chain runs to 366 residues: Nodulation protein NolL (366 aa).

The next 9 membrane-spanning stretches (helical) occupy residues 27-47 (FVKG…LVIY), 62-82 (IYMF…SGTI), 98-118 (LLIP…AAFF), 140-160 (FLWA…FNLL), 164-184 (ILCA…IVPL), 212-232 (HKSL…LDWG), 253-273 (VLLM…SLFH), 286-306 (LVAV…GAVF), and 324-344 (IVVA…VLWI).

This sequence belongs to the acyltransferase 3 family.

It localises to the cell membrane. Thought to be an acetyltransferase that modifies the fucose of the nod factor. The protein is Nodulation protein NolL (nolL) of Sinorhizobium fredii (strain NBRC 101917 / NGR234).